The sequence spans 59 residues: Single-pass membrane and coiled-coil domain-containing protein 4 (59 aa).

The segment at 1-23 (MRQLKGKPKKETSKDKKERKQAM) is disordered. Over residues 9-22 (KKETSKDKKERKQA) the composition is skewed to basic and acidic residues. A coiled-coil region spans residues 9 to 31 (KKETSKDKKERKQAMQEARQQIT). The helical transmembrane segment at 32–52 (TVVLPTLAVVVLLIVVFVYVA) threads the bilayer.

The protein belongs to the SMCO4 family.

Its subcellular location is the membrane. This is Single-pass membrane and coiled-coil domain-containing protein 4 (SMCO4) from Homo sapiens (Human).